Consider the following 475-residue polypeptide: Ribulose bisphosphate carboxylase large chain (475 aa).

Residues 1-2 (MS) constitute a propeptide that is removed on maturation. The residue at position 3 (P3) is an N-acetylproline. N6,N6,N6-trimethyllysine is present on K14. The substrate site is built by N123 and T173. K175 functions as the Proton acceptor in the catalytic mechanism. K177 provides a ligand contact to substrate. Positions 201, 203, and 204 each coordinate Mg(2+). At K201 the chain carries N6-carboxylysine. H294 functions as the Proton acceptor in the catalytic mechanism. Substrate is bound by residues R295, H327, and S379.

It belongs to the RuBisCO large chain family. Type I subfamily. Heterohexadecamer of 8 large chains and 8 small chains; disulfide-linked. The disulfide link is formed within the large subunit homodimers. Mg(2+) is required as a cofactor. In terms of processing, the disulfide bond which can form in the large chain dimeric partners within the hexadecamer appears to be associated with oxidative stress and protein turnover.

The protein localises to the plastid. It localises to the chloroplast. It catalyses the reaction 2 (2R)-3-phosphoglycerate + 2 H(+) = D-ribulose 1,5-bisphosphate + CO2 + H2O. The catalysed reaction is D-ribulose 1,5-bisphosphate + O2 = 2-phosphoglycolate + (2R)-3-phosphoglycerate + 2 H(+). In terms of biological role, ruBisCO catalyzes two reactions: the carboxylation of D-ribulose 1,5-bisphosphate, the primary event in carbon dioxide fixation, as well as the oxidative fragmentation of the pentose substrate in the photorespiration process. Both reactions occur simultaneously and in competition at the same active site. In Angiopteris lygodiifolia (Turnip fern), this protein is Ribulose bisphosphate carboxylase large chain.